The chain runs to 485 residues: Inosine-5'-monophosphate dehydrogenase (485 aa).

CBS domains lie at 99–154 (IVED…TVKE) and 156–212 (MTRE…KNAV). Residues Asp-247 and 294-296 (GIG) contribute to the NAD(+) site. Positions 296 and 298 each coordinate K(+). Ser-299 contacts IMP. Cys-301 lines the K(+) pocket. The active-site Thioimidate intermediate is Cys-301. Residues 334-336 (DGG), 357-358 (GN), and 381-385 (YRGMG) each bind IMP. The active-site Proton acceptor is Arg-397. Glu-412 contributes to the IMP binding site. K(+) contacts are provided by Glu-466, Ser-467, and His-468.

This sequence belongs to the IMPDH/GMPR family. In terms of assembly, homotetramer. Requires K(+) as cofactor.

The enzyme catalyses IMP + NAD(+) + H2O = XMP + NADH + H(+). It functions in the pathway purine metabolism; XMP biosynthesis via de novo pathway; XMP from IMP: step 1/1. Mycophenolic acid (MPA) is a non-competitive inhibitor that prevents formation of the closed enzyme conformation by binding to the same site as the amobile flap. In contrast, mizoribine monophosphate (MZP) is a competitive inhibitor that induces the closed conformation. MPA is a potent inhibitor of mammalian IMPDHs but a poor inhibitor of the bacterial enzymes. MZP is a more potent inhibitor of bacterial IMPDH. In terms of biological role, catalyzes the conversion of inosine 5'-phosphate (IMP) to xanthosine 5'-phosphate (XMP), the first committed and rate-limiting step in the de novo synthesis of guanine nucleotides, and therefore plays an important role in the regulation of cell growth. In Pyrococcus furiosus (strain ATCC 43587 / DSM 3638 / JCM 8422 / Vc1), this protein is Inosine-5'-monophosphate dehydrogenase.